The chain runs to 303 residues: Sulfotransferase 6B1 (303 aa).

65–70 (KCGSNW) contributes to the 3'-phosphoadenylyl sulfate binding site. Catalysis depends on His118, which acts as the Proton acceptor. Residues Arg140, Ser148, Tyr203, 237–242 (STFQAM), and 259–261 (RKG) contribute to the 3'-phosphoadenylyl sulfate site.

Belongs to the sulfotransferase 1 family. Specifically expressed in kidney and testis.

The protein resides in the cytoplasm. It localises to the cytosol. It carries out the reaction thyroxine + 3'-phosphoadenylyl sulfate = thyroxine sulfate + adenosine 3',5'-bisphosphate + H(+). Its function is as follows. Sulfotransferase that utilizes 3'-phospho-5'-adenylyl sulfate (PAPS) as sulfonate donor to catalyze the sulfate conjugation of thyroxine. Involved in the metabolism of thyroxine. This is Sulfotransferase 6B1 (SULT6B1) from Homo sapiens (Human).